Reading from the N-terminus, the 347-residue chain is MRRSTVRAAMKLTFLGAGAWGTALASHAAANHDVVLWGRDPAQLAAIAATGSNEAYLPGVPLSPRLRVEADFEQAVGHAADDPDGLVVVATPVSGLREMTRRLAGRGNGHVRMLWLCKGFEAGTHALPHQMVREELDAAGRTSGFDYGVLTGPSFAREVALGLPCALTVAGSVPTLADCAQAAFHHHAMRIYGSDDLTGVEVGGAVKNVLAIATGASDGLGLGLNARAALVTRGLAEMTRLGLALGGRAETFMGLAGVGDLILTATGDLSRNRKVGQQLAAGQSLDQILASLGHVAEGVRCAQAVAALAEACKIEMPITRAVCAVLFEGLSAADAVAQLLQRDARDE.

NADPH contacts are provided by W20, R39, and K118. Sn-glycerol 3-phosphate is bound by residues K118, G152, and S154. A156 provides a ligand contact to NADPH. Positions 207, 260, 270, 271, and 272 each coordinate sn-glycerol 3-phosphate. K207 serves as the catalytic Proton acceptor. R271 is a binding site for NADPH. The NADPH site is built by V295 and E297.

It belongs to the NAD-dependent glycerol-3-phosphate dehydrogenase family.

The protein localises to the cytoplasm. The enzyme catalyses sn-glycerol 3-phosphate + NAD(+) = dihydroxyacetone phosphate + NADH + H(+). The catalysed reaction is sn-glycerol 3-phosphate + NADP(+) = dihydroxyacetone phosphate + NADPH + H(+). It functions in the pathway membrane lipid metabolism; glycerophospholipid metabolism. Functionally, catalyzes the reduction of the glycolytic intermediate dihydroxyacetone phosphate (DHAP) to sn-glycerol 3-phosphate (G3P), the key precursor for phospholipid synthesis. This chain is Glycerol-3-phosphate dehydrogenase [NAD(P)+], found in Cupriavidus pinatubonensis (strain JMP 134 / LMG 1197) (Cupriavidus necator (strain JMP 134)).